A 603-amino-acid polypeptide reads, in one-letter code: UvrABC system protein C (603 aa).

Positions 15–92 (DQPGCYLMKD…IKKHDPRFNI (78 aa)) constitute a GIY-YIG domain. Residues 197–232 (KTVKNDLMKKMQEAAENMEFEKAGEFRDQINAIETT) enclose the UVR domain.

Belongs to the UvrC family. As to quaternary structure, interacts with UvrB in an incision complex.

The protein localises to the cytoplasm. In terms of biological role, the UvrABC repair system catalyzes the recognition and processing of DNA lesions. UvrC both incises the 5' and 3' sides of the lesion. The N-terminal half is responsible for the 3' incision and the C-terminal half is responsible for the 5' incision. In Listeria monocytogenes serotype 4b (strain CLIP80459), this protein is UvrABC system protein C.